A 90-amino-acid polypeptide reads, in one-letter code: Exodeoxyribonuclease 7 small subunit (90 aa).

The segment at 62-90 (QDGQANPMSSQGHTAGEYPDDEAEEAEEA) is disordered. The segment covering 64-74 (GQANPMSSQGH) has biased composition (polar residues). Residues 79-90 (YPDDEAEEAEEA) are compositionally biased toward acidic residues.

It belongs to the XseB family. As to quaternary structure, heterooligomer composed of large and small subunits.

Its subcellular location is the cytoplasm. It carries out the reaction Exonucleolytic cleavage in either 5'- to 3'- or 3'- to 5'-direction to yield nucleoside 5'-phosphates.. Functionally, bidirectionally degrades single-stranded DNA into large acid-insoluble oligonucleotides, which are then degraded further into small acid-soluble oligonucleotides. This Desulfovibrio desulfuricans (strain ATCC 27774 / DSM 6949 / MB) protein is Exodeoxyribonuclease 7 small subunit.